The primary structure comprises 330 residues: Polyprenal reductase (330 aa).

Over Met-1 to Arg-16 the chain is Cytoplasmic. Residues Ala-17–Ala-37 traverse the membrane as a helical segment. The Lumenal segment spans residues Arg-38 to Ser-89. A helical membrane pass occupies residues Leu-90–Ala-110. Residues Leu-111 to Lys-136 lie on the Cytoplasmic side of the membrane. The helical transmembrane segment at Leu-137–Phe-157 threads the bilayer. Over Glu-158–Ala-169 the chain is Lumenal. The helical transmembrane segment at Ile-170–Leu-190 threads the bilayer. Residues Ser-191–Asn-206 lie on the Cytoplasmic side of the membrane. The chain crosses the membrane as a helical span at residues Leu-207–Ala-227. The Lumenal segment spans residues His-228–Ser-277. Residues Met-278–Phe-298 form a helical membrane-spanning segment. Over Ser-299–Phe-330 the chain is Cytoplasmic.

The protein belongs to the steroid 5-alpha reductase family. Polyprenal reductase subfamily. In terms of tissue distribution, expressed in the 2 tissues tested i.e. testis and liver.

The protein localises to the endoplasmic reticulum membrane. The enzyme catalyses a di-trans,poly-cis-dolichal + NADP(+) = a di-trans,poly-cis-polyprenal + NADPH + H(+). It carries out the reaction a 3-oxo-5alpha-steroid + NADP(+) = a 3-oxo-Delta(4)-steroid + NADPH + H(+). It catalyses the reaction androst-4-ene-3,17-dione + NADPH + H(+) = 5alpha-androstan-3,17-dione + NADP(+). The catalysed reaction is 17beta-hydroxy-5alpha-androstan-3-one + NADP(+) = testosterone + NADPH + H(+). Its pathway is protein modification; protein glycosylation. Plays a key role in early steps of protein N-linked glycosylation by being involved in the conversion of polyprenol into dolichol. Acts as a polyprenal reductase that mediates the reduction of polyprenal into dolichal in a NADP-dependent mechanism. Dolichols are required for the synthesis of dolichol-linked monosaccharides and the oligosaccharide precursor used for N-glycosylation. Also able to convert testosterone (T) into 5-alpha-dihydrotestosterone (DHT). This chain is Polyprenal reductase, found in Rattus norvegicus (Rat).